Consider the following 823-residue polypeptide: Leucine--tRNA ligase (823 aa).

The 'HIGH' region signature appears at 42 to 52 (PYPSGTLHMGH). A 'KMSKS' region motif is present at residues 575–579 (KMSKS). Residue K578 participates in ATP binding.

Belongs to the class-I aminoacyl-tRNA synthetase family.

The protein resides in the cytoplasm. The catalysed reaction is tRNA(Leu) + L-leucine + ATP = L-leucyl-tRNA(Leu) + AMP + diphosphate. This is Leucine--tRNA ligase from Legionella pneumophila (strain Corby).